A 480-amino-acid polypeptide reads, in one-letter code: Docking protein 1 (480 aa).

At methionine 1 the chain carries N-acetylmethionine. One can recognise a PH domain in the interval 3-119 (GALMEGPLFL…WVQILCRTAF (117 aa)). Position 48 is a phosphoserine (serine 48). The IRS-type PTB domain occupies 151-259 (EGSQFWVTSQ…QQQKAQGKVG (109 aa)). Positions 253–262 (KAQGKVGQGQ) are enriched in low complexity. The interval 253-328 (KAQGKVGQGQ…GSTPAGAGEG (76 aa)) is disordered. Positions 265-276 (TRTDSHDGETEG) are enriched in basic and acidic residues. Residues serine 269 and serine 290 each carry the phosphoserine modification. Phosphotyrosine is present on residues tyrosine 295, tyrosine 336, and tyrosine 340. The residue at position 361 (tyrosine 361) is a Phosphotyrosine; by INSR. Tyrosine 376 carries the post-translational modification Phosphotyrosine. Tyrosine 397 carries the phosphotyrosine; by INSR modification. Positions 398-480 (ELPYNPATDD…RVGVKSEGST (83 aa)) are disordered. At tyrosine 408 the chain carries Phosphotyrosine. Residues 410 to 423 (VPPPRSSKPTPAPK) are compositionally biased toward pro residues. Residue serine 415 is modified to Phosphoserine. Low complexity predominate over residues 432–445 (SGTTAGSGSKGSDT). Positions 446-455 (ALYSQVQKSG) are enriched in polar residues. A Phosphotyrosine modification is found at tyrosine 448.

The protein belongs to the DOK family. Type A subfamily. Interacts with RasGAP and INPP5D/SHIP1. Interacts directly with phosphorylated ITGB3. Interacts with SRMS (via the SH2 and SH3 domains). Constitutively tyrosine-phosphorylated. Phosphorylated by TEC. Phosphorylated by LYN. Phosphorylated on tyrosine residues by the insulin receptor kinase. Results in the negative regulation of the insulin signaling pathway. Phosphorylated on tyrosine residues by SRMS.

It is found in the cytoplasm. The protein localises to the nucleus. DOK proteins are enzymatically inert adaptor or scaffolding proteins. They provide a docking platform for the assembly of multimolecular signaling complexes. DOK1 appears to be a negative regulator of the insulin signaling pathway. Modulates integrin activation by competing with talin for the same binding site on ITGB3. The protein is Docking protein 1 (Dok1) of Rattus norvegicus (Rat).